Consider the following 219-residue polypeptide: Large ribosomal subunit protein uL3 (219 aa).

The interval 133–153 (GRASHGNSRSHNVPGSIGMAQ) is disordered. Position 153 is an N5-methylglutamine (Gln153).

Belongs to the universal ribosomal protein uL3 family. As to quaternary structure, part of the 50S ribosomal subunit. Forms a cluster with proteins L14 and L19. Post-translationally, methylated by PrmB.

Functionally, one of the primary rRNA binding proteins, it binds directly near the 3'-end of the 23S rRNA, where it nucleates assembly of the 50S subunit. The sequence is that of Large ribosomal subunit protein uL3 from Burkholderia thailandensis (strain ATCC 700388 / DSM 13276 / CCUG 48851 / CIP 106301 / E264).